The chain runs to 485 residues: Protein nucleotidyltransferase YdiU (485 aa).

Residues glycine 90, glycine 92, arginine 93, lysine 113, aspartate 125, glycine 126, arginine 176, and arginine 183 each coordinate ATP. Catalysis depends on aspartate 252, which acts as the Proton acceptor. The Mg(2+) site is built by asparagine 253 and aspartate 262. Aspartate 262 provides a ligand contact to ATP.

The protein belongs to the SELO family. It depends on Mg(2+) as a cofactor. Requires Mn(2+) as cofactor.

It carries out the reaction L-seryl-[protein] + ATP = 3-O-(5'-adenylyl)-L-seryl-[protein] + diphosphate. The catalysed reaction is L-threonyl-[protein] + ATP = 3-O-(5'-adenylyl)-L-threonyl-[protein] + diphosphate. It catalyses the reaction L-tyrosyl-[protein] + ATP = O-(5'-adenylyl)-L-tyrosyl-[protein] + diphosphate. The enzyme catalyses L-histidyl-[protein] + UTP = N(tele)-(5'-uridylyl)-L-histidyl-[protein] + diphosphate. It carries out the reaction L-seryl-[protein] + UTP = O-(5'-uridylyl)-L-seryl-[protein] + diphosphate. The catalysed reaction is L-tyrosyl-[protein] + UTP = O-(5'-uridylyl)-L-tyrosyl-[protein] + diphosphate. Its function is as follows. Nucleotidyltransferase involved in the post-translational modification of proteins. It can catalyze the addition of adenosine monophosphate (AMP) or uridine monophosphate (UMP) to a protein, resulting in modifications known as AMPylation and UMPylation. In Aliivibrio salmonicida (strain LFI1238) (Vibrio salmonicida (strain LFI1238)), this protein is Protein nucleotidyltransferase YdiU.